The primary structure comprises 95 residues: MTITTEDILDCANLSRLALDEKTAQNYAGNLDKILAMMDILDGVNTDNIKPLANIHEACNELRADIANSDIGRDGFQAVAPMVQDGLYLVPQVIE.

It belongs to the GatC family. Heterotrimer of A, B and C subunits.

It catalyses the reaction L-glutamyl-tRNA(Gln) + L-glutamine + ATP + H2O = L-glutaminyl-tRNA(Gln) + L-glutamate + ADP + phosphate + H(+). The enzyme catalyses L-aspartyl-tRNA(Asn) + L-glutamine + ATP + H2O = L-asparaginyl-tRNA(Asn) + L-glutamate + ADP + phosphate + 2 H(+). Allows the formation of correctly charged Asn-tRNA(Asn) or Gln-tRNA(Gln) through the transamidation of misacylated Asp-tRNA(Asn) or Glu-tRNA(Gln) in organisms which lack either or both of asparaginyl-tRNA or glutaminyl-tRNA synthetases. The reaction takes place in the presence of glutamine and ATP through an activated phospho-Asp-tRNA(Asn) or phospho-Glu-tRNA(Gln). This chain is Glutamyl-tRNA(Gln) amidotransferase subunit C, found in Moraxella catarrhalis (Branhamella catarrhalis).